Here is a 358-residue protein sequence, read N- to C-terminus: Phenylalanine--tRNA ligase alpha subunit (358 aa).

Glu262 contributes to the Mg(2+) binding site.

Belongs to the class-II aminoacyl-tRNA synthetase family. Phe-tRNA synthetase alpha subunit type 1 subfamily. Tetramer of two alpha and two beta subunits. Mg(2+) serves as cofactor.

It is found in the cytoplasm. It catalyses the reaction tRNA(Phe) + L-phenylalanine + ATP = L-phenylalanyl-tRNA(Phe) + AMP + diphosphate + H(+). In Streptomyces coelicolor (strain ATCC BAA-471 / A3(2) / M145), this protein is Phenylalanine--tRNA ligase alpha subunit (pheS).